The chain runs to 270 residues: Putative phosphoenolpyruvate synthase regulatory protein (270 aa).

150-157 (GVSRCGKT) is a binding site for ADP.

This sequence belongs to the pyruvate, phosphate/water dikinase regulatory protein family. PSRP subfamily.

The enzyme catalyses [pyruvate, water dikinase] + ADP = [pyruvate, water dikinase]-phosphate + AMP + H(+). It carries out the reaction [pyruvate, water dikinase]-phosphate + phosphate + H(+) = [pyruvate, water dikinase] + diphosphate. In terms of biological role, bifunctional serine/threonine kinase and phosphorylase involved in the regulation of the phosphoenolpyruvate synthase (PEPS) by catalyzing its phosphorylation/dephosphorylation. This Aeromonas hydrophila subsp. hydrophila (strain ATCC 7966 / DSM 30187 / BCRC 13018 / CCUG 14551 / JCM 1027 / KCTC 2358 / NCIMB 9240 / NCTC 8049) protein is Putative phosphoenolpyruvate synthase regulatory protein.